The primary structure comprises 396 residues: 1-deoxy-D-xylulose 5-phosphate reductoisomerase (396 aa).

The NADPH site is built by Thr-17, Gly-18, Ser-19, Ile-20, Asn-47, and Asn-130. 1-deoxy-D-xylulose 5-phosphate is bound at residue Lys-131. Residue Glu-132 coordinates NADPH. Mn(2+) is bound at residue Asp-156. Residues Ser-157, Glu-158, Ser-182, and His-205 each coordinate 1-deoxy-D-xylulose 5-phosphate. Mn(2+) is bound at residue Glu-158. Gly-211 is a binding site for NADPH. 1-deoxy-D-xylulose 5-phosphate contacts are provided by Ser-218, Asn-223, Lys-224, and Glu-227. Glu-227 lines the Mn(2+) pocket.

The protein belongs to the DXR family. Mg(2+) is required as a cofactor. Mn(2+) serves as cofactor.

It carries out the reaction 2-C-methyl-D-erythritol 4-phosphate + NADP(+) = 1-deoxy-D-xylulose 5-phosphate + NADPH + H(+). It functions in the pathway isoprenoid biosynthesis; isopentenyl diphosphate biosynthesis via DXP pathway; isopentenyl diphosphate from 1-deoxy-D-xylulose 5-phosphate: step 1/6. In terms of biological role, catalyzes the NADPH-dependent rearrangement and reduction of 1-deoxy-D-xylulose-5-phosphate (DXP) to 2-C-methyl-D-erythritol 4-phosphate (MEP). The sequence is that of 1-deoxy-D-xylulose 5-phosphate reductoisomerase from Rhizobium johnstonii (strain DSM 114642 / LMG 32736 / 3841) (Rhizobium leguminosarum bv. viciae).